Consider the following 201-residue polypeptide: 3-isopropylmalate dehydratase small subunit (201 aa).

Belongs to the LeuD family. LeuD type 1 subfamily. Heterodimer of LeuC and LeuD.

It carries out the reaction (2R,3S)-3-isopropylmalate = (2S)-2-isopropylmalate. Its pathway is amino-acid biosynthesis; L-leucine biosynthesis; L-leucine from 3-methyl-2-oxobutanoate: step 2/4. Catalyzes the isomerization between 2-isopropylmalate and 3-isopropylmalate, via the formation of 2-isopropylmaleate. This is 3-isopropylmalate dehydratase small subunit from Buchnera aphidicola subsp. Baizongia pistaciae (strain Bp).